Here is a 93-residue protein sequence, read N- to C-terminus: Allatostatin C (93 aa).

Residues 1-23 (MSSVRNIAALALVLLVLAEWSAA) form the signal peptide. Residues 24–61 (MPTTDKDKERLLNTVDLIDDDGSIETALINYLFTKQIV) constitute a propeptide that is removed on maturation. An intrachain disulfide couples C83 to C90.

It is found in the secreted. Its function is as follows. Inhibits juvenile hormone biosynthesis. The protein is Allatostatin C of Camponotus floridanus (Florida carpenter ant).